Here is a 465-residue protein sequence, read N- to C-terminus: Iron-sulfur cluster assembly SufBD family protein SERP0500 (465 aa).

This sequence belongs to the iron-sulfur cluster assembly SufBD family.

The protein is Iron-sulfur cluster assembly SufBD family protein SERP0500 of Staphylococcus epidermidis (strain ATCC 35984 / DSM 28319 / BCRC 17069 / CCUG 31568 / BM 3577 / RP62A).